A 344-amino-acid polypeptide reads, in one-letter code: Phenylalanine--tRNA ligase alpha subunit (344 aa).

Glu-258 contributes to the Mg(2+) binding site.

Belongs to the class-II aminoacyl-tRNA synthetase family. Phe-tRNA synthetase alpha subunit type 1 subfamily. Tetramer of two alpha and two beta subunits. Mg(2+) serves as cofactor.

Its subcellular location is the cytoplasm. It catalyses the reaction tRNA(Phe) + L-phenylalanine + ATP = L-phenylalanyl-tRNA(Phe) + AMP + diphosphate + H(+). The polypeptide is Phenylalanine--tRNA ligase alpha subunit (Thiobacillus denitrificans (strain ATCC 25259 / T1)).